A 607-amino-acid chain; its full sequence is DNA mismatch repair protein MutL (607 aa).

It belongs to the DNA mismatch repair MutL/HexB family.

This protein is involved in the repair of mismatches in DNA. It is required for dam-dependent methyl-directed DNA mismatch repair. May act as a 'molecular matchmaker', a protein that promotes the formation of a stable complex between two or more DNA-binding proteins in an ATP-dependent manner without itself being part of a final effector complex. The chain is DNA mismatch repair protein MutL from Gemmatimonas aurantiaca (strain DSM 14586 / JCM 11422 / NBRC 100505 / T-27).